The chain runs to 434 residues: Quinolone resistance transporter (434 aa).

Transmembrane regions (helical) follow at residues 15–35 (LIPA…AVGF), 45–65 (GIGD…YFLF), 85–105 (ILLT…PKSF), 110–130 (FLLG…ITQW), 142–162 (MFVL…GLLL), 175–195 (WLFV…FLWL), 241–261 (VLLL…LNLW), 275–295 (IQIG…LLII), 306–326 (YGHL…SGWL), 333–353 (LAAL…FWTL), 367–387 (IALI…GIGL), and 396–416 (AAGL…TYIV).

It belongs to the major facilitator superfamily.

The protein localises to the cell inner membrane. Functionally, efflux pump that mediates resistance to quinolone-type antibiotics. This chain is Quinolone resistance transporter, found in Acinetobacter baumannii.